Consider the following 326-residue polypeptide: Malate dehydrogenase (326 aa).

11–17 provides a ligand contact to NAD(+); that stretch reads GAAGQIG. Substrate is bound by residues arginine 92 and arginine 98. NAD(+) contacts are provided by residues asparagine 105, glutamine 112, and 129–131; that span reads VGN. Residues asparagine 131 and arginine 162 each coordinate substrate. Histidine 187 functions as the Proton acceptor in the catalytic mechanism.

The protein belongs to the LDH/MDH superfamily. MDH type 2 family.

It carries out the reaction (S)-malate + NAD(+) = oxaloacetate + NADH + H(+). Its function is as follows. Catalyzes the reversible oxidation of malate to oxaloacetate. In Alkalilimnicola ehrlichii (strain ATCC BAA-1101 / DSM 17681 / MLHE-1), this protein is Malate dehydrogenase.